A 370-amino-acid polypeptide reads, in one-letter code: Pyruvate dehydrogenase E1 component subunit alpha (370 aa).

In terms of assembly, heterodimer of an alpha and a beta chain. The cofactor is thiamine diphosphate.

It catalyses the reaction N(6)-[(R)-lipoyl]-L-lysyl-[protein] + pyruvate + H(+) = N(6)-[(R)-S(8)-acetyldihydrolipoyl]-L-lysyl-[protein] + CO2. The pyruvate dehydrogenase complex catalyzes the overall conversion of pyruvate to acetyl-CoA and CO(2). It contains multiple copies of three enzymatic components: pyruvate dehydrogenase (E1), dihydrolipoamide acetyltransferase (E2) and lipoamide dehydrogenase (E3). This Staphylococcus aureus (strain MRSA252) protein is Pyruvate dehydrogenase E1 component subunit alpha (pdhA).